A 598-amino-acid polypeptide reads, in one-letter code: Arginine--tRNA ligase (598 aa).

The short motif at 139–149 (ANPTGPMHVGH) is the 'HIGH' region element.

It belongs to the class-I aminoacyl-tRNA synthetase family. In terms of assembly, monomer.

It localises to the cytoplasm. The catalysed reaction is tRNA(Arg) + L-arginine + ATP = L-arginyl-tRNA(Arg) + AMP + diphosphate. This Bradyrhizobium sp. (strain BTAi1 / ATCC BAA-1182) protein is Arginine--tRNA ligase.